A 405-amino-acid polypeptide reads, in one-letter code: MKKVIKKIALAYSGGLDTSIMIPWLKEHYEHAEVIAVICDLGQQEDLDAIKNKALKSGASKAYVVDVKNEFATQYLWPLVKSGALYEDQYILGTISRPLIAQKLVEIALTEQVNAVAHGATGKGNDQVRFEYSIKALAPQLEIIAPWRTWDIKSRQEAIVYAKAHGIEVPVTPKAPYSRDHNIWYISHEGGVLEDPSQEMPNDVLLMTAPVSQTPDEEEVVVLDFKKGVPVALNGQELSPVDLLNSLNQKAGQHGIGVADIVENRLVGMKIRGIYEAPAAAVLYKAHKLLESLCLTRSTLHLKQSLQQTYANLVYEGRWFSQTKQALDAFIDVTQQHVTGCVKLKLFKGNIIPAGMHSPYSLHHPELATFEEDNVYNQKDAEGFINLFSLSAKIYSQVHQGGNYD.

11–19 (AYSGGLDTS) contributes to the ATP binding site. Tyr-90 is an L-citrulline binding site. Gly-119 contacts ATP. Residues Thr-121, Asn-125, and Asp-126 each coordinate L-aspartate. Asn-125 serves as a coordination point for L-citrulline. Residues Arg-129, Ser-178, Ser-187, Glu-263, and Tyr-275 each coordinate L-citrulline.

This sequence belongs to the argininosuccinate synthase family. Type 1 subfamily. As to quaternary structure, homotetramer.

It localises to the cytoplasm. It catalyses the reaction L-citrulline + L-aspartate + ATP = 2-(N(omega)-L-arginino)succinate + AMP + diphosphate + H(+). It functions in the pathway amino-acid biosynthesis; L-arginine biosynthesis; L-arginine from L-ornithine and carbamoyl phosphate: step 2/3. This chain is Argininosuccinate synthase, found in Legionella pneumophila subsp. pneumophila (strain Philadelphia 1 / ATCC 33152 / DSM 7513).